A 468-amino-acid polypeptide reads, in one-letter code: WD repeat-containing protein 55 homolog (468 aa).

A disordered region spans residues 1–107 (MRNFNSPKFG…VPKRVIDDYD (107 aa)). Acidic residues-rich tracts occupy residues 15–26 (DDSDDDDFDSGT), 41–58 (PITE…EYNP), and 67–91 (SDDE…DGED). 6 WD repeats span residues 134-173 (KTED…CTIV), 178-217 (THTK…LKRF), 221-259 (AHEE…PVFK), 262-301 (EVED…MYVQ), 304-343 (PYEE…YHCD), and 388-427 (QHSL…EFDD).

It belongs to the WD repeat WDR55 family.

This is WD repeat-containing protein 55 homolog from Aedes aegypti (Yellowfever mosquito).